Here is a 156-residue protein sequence, read N- to C-terminus: 6,7-dimethyl-8-ribityllumazine synthase (156 aa).

5-amino-6-(D-ribitylamino)uracil-binding positions include F25, 59–61, and 83–85; these read AFE and AVI. 88 to 89 provides a ligand contact to (2S)-2-hydroxy-3-oxobutyl phosphate; that stretch reads AT. Catalysis depends on H91, which acts as the Proton donor. F116 contributes to the 5-amino-6-(D-ribitylamino)uracil binding site. R130 is a binding site for (2S)-2-hydroxy-3-oxobutyl phosphate.

This sequence belongs to the DMRL synthase family.

It catalyses the reaction (2S)-2-hydroxy-3-oxobutyl phosphate + 5-amino-6-(D-ribitylamino)uracil = 6,7-dimethyl-8-(1-D-ribityl)lumazine + phosphate + 2 H2O + H(+). Its pathway is cofactor biosynthesis; riboflavin biosynthesis; riboflavin from 2-hydroxy-3-oxobutyl phosphate and 5-amino-6-(D-ribitylamino)uracil: step 1/2. Catalyzes the formation of 6,7-dimethyl-8-ribityllumazine by condensation of 5-amino-6-(D-ribitylamino)uracil with 3,4-dihydroxy-2-butanone 4-phosphate. This is the penultimate step in the biosynthesis of riboflavin. This is 6,7-dimethyl-8-ribityllumazine synthase from Nitratidesulfovibrio vulgaris (strain DSM 19637 / Miyazaki F) (Desulfovibrio vulgaris).